We begin with the raw amino-acid sequence, 1091 residues long: ATP-dependent helicase/deoxyribonuclease subunit B (1091 aa).

This sequence belongs to the helicase family. AddB/RexB type 2 subfamily. As to quaternary structure, heterodimer of AddA and RexB. The cofactor is Mg(2+).

Its function is as follows. The heterodimer acts as both an ATP-dependent DNA helicase and an ATP-dependent, dual-direction single-stranded exonuclease. Recognizes the chi site generating a DNA molecule suitable for the initiation of homologous recombination. This subunit has 5' -&gt; 3' nuclease activity but not helicase activity. This is ATP-dependent helicase/deoxyribonuclease subunit B from Streptococcus pneumoniae serotype 19F (strain G54).